A 190-amino-acid polypeptide reads, in one-letter code: Probable nicotinate-nucleotide adenylyltransferase (190 aa).

This sequence belongs to the NadD family.

It catalyses the reaction nicotinate beta-D-ribonucleotide + ATP + H(+) = deamido-NAD(+) + diphosphate. Its pathway is cofactor biosynthesis; NAD(+) biosynthesis; deamido-NAD(+) from nicotinate D-ribonucleotide: step 1/1. Its function is as follows. Catalyzes the reversible adenylation of nicotinate mononucleotide (NaMN) to nicotinic acid adenine dinucleotide (NaAD). This Borrelia hermsii (strain HS1 / DAH) protein is Probable nicotinate-nucleotide adenylyltransferase.